The sequence spans 332 residues: Ribosomal RNA small subunit methyltransferase H (332 aa).

S-adenosyl-L-methionine is bound by residues 36-38, aspartate 61, phenylalanine 88, aspartate 114, and glutamine 121; that span reads GGH.

The protein belongs to the methyltransferase superfamily. RsmH family.

Its subcellular location is the cytoplasm. The enzyme catalyses cytidine(1402) in 16S rRNA + S-adenosyl-L-methionine = N(4)-methylcytidine(1402) in 16S rRNA + S-adenosyl-L-homocysteine + H(+). Its function is as follows. Specifically methylates the N4 position of cytidine in position 1402 (C1402) of 16S rRNA. In Pelodictyon phaeoclathratiforme (strain DSM 5477 / BU-1), this protein is Ribosomal RNA small subunit methyltransferase H.